A 189-amino-acid polypeptide reads, in one-letter code: Probable nicotinate-nucleotide adenylyltransferase (189 aa).

It belongs to the NadD family.

The catalysed reaction is nicotinate beta-D-ribonucleotide + ATP + H(+) = deamido-NAD(+) + diphosphate. It participates in cofactor biosynthesis; NAD(+) biosynthesis; deamido-NAD(+) from nicotinate D-ribonucleotide: step 1/1. Functionally, catalyzes the reversible adenylation of nicotinate mononucleotide (NaMN) to nicotinic acid adenine dinucleotide (NaAD). The polypeptide is Probable nicotinate-nucleotide adenylyltransferase (Bacillus cereus (strain ATCC 10987 / NRS 248)).